The chain runs to 110 residues: UPF0060 membrane protein ASA_2267 (110 aa).

The next 4 membrane-spanning stretches (helical) occupy residues Ile-7 to Trp-27, Ser-33 to Leu-53, Ala-63 to Ile-83, and Leu-87 to Pro-107.

It belongs to the UPF0060 family.

Its subcellular location is the cell inner membrane. In Aeromonas salmonicida (strain A449), this protein is UPF0060 membrane protein ASA_2267.